The chain runs to 222 residues: Large ribosomal subunit protein uL4 (222 aa).

Positions 42-100 (AAGRQGTHSTKTRGEVRGGGKKPYRQKGTGRARQGSVRAPQFTGGGTVHGPKPRDYAQR) are disordered. Positions 60 to 71 (GGKKPYRQKGTG) are enriched in basic residues.

This sequence belongs to the universal ribosomal protein uL4 family. As to quaternary structure, part of the 50S ribosomal subunit.

In terms of biological role, one of the primary rRNA binding proteins, this protein initially binds near the 5'-end of the 23S rRNA. It is important during the early stages of 50S assembly. It makes multiple contacts with different domains of the 23S rRNA in the assembled 50S subunit and ribosome. Forms part of the polypeptide exit tunnel. This is Large ribosomal subunit protein uL4 from Thermobifida fusca (strain YX).